The chain runs to 212 residues: MKEILPGLYILRRDRLATSPPSQEPLYGEKIVDGLRVWDPRRSKLAALLLRYPCLEGVVPSGKVLYLGAANGTTVSYLGDILTGGMIYAVEISPRAMRDLLLLAEQRENIIPVLGDAARPETYRRIVEPVDLLYQDVAQRNQAEIASRNASIYLKPNGLMVVMIKARSIDSTARSTEIFDEEIRRLSGVEVLRRVDLPHHRDHVAVVARKLR.

S-adenosyl-L-methionine contacts are provided by residues 73–74 (TT), 91–92 (EI), 116–117 (DA), and 136–139 (DVAQ).

This sequence belongs to the methyltransferase superfamily. Fibrillarin family. Interacts with nop5. Component of box C/D small ribonucleoprotein (sRNP) particles that contain rpl7ae, FlpA and nop5, plus a guide RNA.

Functionally, involved in pre-rRNA and tRNA processing. Utilizes the methyl donor S-adenosyl-L-methionine to catalyze the site-specific 2'-hydroxyl methylation of ribose moieties in rRNA and tRNA. Site specificity is provided by a guide RNA that base pairs with the substrate. Methylation occurs at a characteristic distance from the sequence involved in base pairing with the guide RNA. This Methanothrix thermoacetophila (strain DSM 6194 / JCM 14653 / NBRC 101360 / PT) (Methanosaeta thermophila) protein is Fibrillarin-like rRNA/tRNA 2'-O-methyltransferase.